Consider the following 334-residue polypeptide: L-lactate dehydrogenase B-A chain (334 aa).

NAD(+) is bound by residues 30–58 and R100; that span reads GQVG…VEDR. The substrate site is built by R107, N139, and R170. An NAD(+)-binding site is contributed by N139. Catalysis depends on H194, which acts as the Proton acceptor. T249 contributes to the substrate binding site.

It belongs to the LDH/MDH superfamily. LDH family. Homotetramer.

It is found in the cytoplasm. It carries out the reaction (S)-lactate + NAD(+) = pyruvate + NADH + H(+). The protein operates within fermentation; pyruvate fermentation to lactate; (S)-lactate from pyruvate: step 1/1. This Danio rerio (Zebrafish) protein is L-lactate dehydrogenase B-A chain (ldhba).